The following is a 37-amino-acid chain: Large ribosomal subunit protein bL36 (37 aa).

Belongs to the bacterial ribosomal protein bL36 family.

This chain is Large ribosomal subunit protein bL36, found in Natranaerobius thermophilus (strain ATCC BAA-1301 / DSM 18059 / JW/NM-WN-LF).